Reading from the N-terminus, the 201-residue chain is Large ribosomal subunit protein uL4 (201 aa).

Residues 44–68 (KAQKTRSEVAGTTKKSKKQKGGGAR) are disordered.

Belongs to the universal ribosomal protein uL4 family. In terms of assembly, part of the 50S ribosomal subunit.

Functionally, one of the primary rRNA binding proteins, this protein initially binds near the 5'-end of the 23S rRNA. It is important during the early stages of 50S assembly. It makes multiple contacts with different domains of the 23S rRNA in the assembled 50S subunit and ribosome. In terms of biological role, forms part of the polypeptide exit tunnel. The sequence is that of Large ribosomal subunit protein uL4 from Xanthomonas campestris pv. campestris (strain 8004).